We begin with the raw amino-acid sequence, 564 residues long: Dihydroxy-acid dehydratase 2 (564 aa).

C59 contacts [2Fe-2S] cluster. D91 is a Mg(2+) binding site. Residue C132 participates in [2Fe-2S] cluster binding. Residues D133 and K134 each coordinate Mg(2+). K134 carries the post-translational modification N6-carboxylysine. Position 204 (C204) interacts with [2Fe-2S] cluster. E454 lines the Mg(2+) pocket. S480 serves as the catalytic Proton acceptor.

It belongs to the IlvD/Edd family. As to quaternary structure, homodimer. The cofactor is [2Fe-2S] cluster. It depends on Mg(2+) as a cofactor.

It catalyses the reaction (2R)-2,3-dihydroxy-3-methylbutanoate = 3-methyl-2-oxobutanoate + H2O. The catalysed reaction is (2R,3R)-2,3-dihydroxy-3-methylpentanoate = (S)-3-methyl-2-oxopentanoate + H2O. The protein operates within amino-acid biosynthesis; L-isoleucine biosynthesis; L-isoleucine from 2-oxobutanoate: step 3/4. It functions in the pathway amino-acid biosynthesis; L-valine biosynthesis; L-valine from pyruvate: step 3/4. Functionally, functions in the biosynthesis of branched-chain amino acids. Catalyzes the dehydration of (2R,3R)-2,3-dihydroxy-3-methylpentanoate (2,3-dihydroxy-3-methylvalerate) into 2-oxo-3-methylpentanoate (2-oxo-3-methylvalerate) and of (2R)-2,3-dihydroxy-3-methylbutanoate (2,3-dihydroxyisovalerate) into 2-oxo-3-methylbutanoate (2-oxoisovalerate), the penultimate precursor to L-isoleucine and L-valine, respectively. The polypeptide is Dihydroxy-acid dehydratase 2 (Staphylococcus saprophyticus subsp. saprophyticus (strain ATCC 15305 / DSM 20229 / NCIMB 8711 / NCTC 7292 / S-41)).